The chain runs to 310 residues: Homeobox protein Hox-A13a (310 aa).

The homeobox DNA-binding region spans Gly-244 to Val-303.

It belongs to the Abd-B homeobox family.

Its subcellular location is the nucleus. Its function is as follows. Sequence-specific transcription factor which is part of a developmental regulatory system that provides cells with specific positional identities on the anterior-posterior axis. The protein is Homeobox protein Hox-A13a (hoxa13a) of Danio rerio (Zebrafish).